The chain runs to 354 residues: Methionine aminotransferase BCAT4 (354 aa).

Lys198 bears the N6-(pyridoxal phosphate)lysine mark.

The protein belongs to the class-IV pyridoxal-phosphate-dependent aminotransferase family. The cofactor is pyridoxal 5'-phosphate. In terms of tissue distribution, mostly expressed in phloem.

Its subcellular location is the cytoplasm. It carries out the reaction a 2-oxocarboxylate + L-methionine = 4-methylsulfanyl-2-oxobutanoate + an L-alpha-amino acid. Functionally, converts 2-oxo acids to branched-chain amino acids. Shows activity with L-Leu, L-Ile and L-Val as amino donors and alpha-keto-glutarate as an amino acceptor, but no activity for D-isomers of Leu, Ile, Val, Asp, Glu or Ala. Acts on methionine and its derivatives and the corresponding 2-oxo acids. Catalyzes the initial deamination of methionine to 4-methylthio-2-oxobutyrate as well as the transamination of other typical intermediates of the methionine chain elongation pathway. In Arabidopsis thaliana (Mouse-ear cress), this protein is Methionine aminotransferase BCAT4 (BCAT4).